A 433-amino-acid chain; its full sequence is 3-phosphoshikimate 1-carboxyvinyltransferase (433 aa).

3-phosphoshikimate is bound by residues K21, S22, and R26. K21 serves as a coordination point for phosphoenolpyruvate. Residues G92 and R120 each coordinate phosphoenolpyruvate. Positions 166, 168, 317, and 344 each coordinate 3-phosphoshikimate. Position 168 (Q168) interacts with phosphoenolpyruvate. D317 functions as the Proton acceptor in the catalytic mechanism. 2 residues coordinate phosphoenolpyruvate: R348 and R391.

Belongs to the EPSP synthase family. In terms of assembly, monomer.

Its subcellular location is the cytoplasm. It carries out the reaction 3-phosphoshikimate + phosphoenolpyruvate = 5-O-(1-carboxyvinyl)-3-phosphoshikimate + phosphate. The protein operates within metabolic intermediate biosynthesis; chorismate biosynthesis; chorismate from D-erythrose 4-phosphate and phosphoenolpyruvate: step 6/7. Its function is as follows. Catalyzes the transfer of the enolpyruvyl moiety of phosphoenolpyruvate (PEP) to the 5-hydroxyl of shikimate-3-phosphate (S3P) to produce enolpyruvyl shikimate-3-phosphate and inorganic phosphate. The sequence is that of 3-phosphoshikimate 1-carboxyvinyltransferase from Caldicellulosiruptor bescii (strain ATCC BAA-1888 / DSM 6725 / KCTC 15123 / Z-1320) (Anaerocellum thermophilum).